The following is a 235-amino-acid chain: MLRTSVRSPLLYRCLSKRFQSTAVPLSSKAVQNDLELTPKQQTNSSTTTSTNIPPQLPVNVEALYYAPLKNPVTHGHLVADLQLRAYDNENLDFFCDFILRAGYYLGLPMTGPKPLPTRRERWTVIRSPFVHAKSKENFERHTHKRLIRVWDSNPEVVQMLVDYITKNSIAGVGLKCTTYQRTTVDAKSGKISDAIEEINSTHNINPSLKENEEIGAKVVELLNTPTFKKYLEEK.

A mitochondrion-targeting transit peptide spans 1–19; it reads MLRTSVRSPLLYRCLSKRF.

Belongs to the universal ribosomal protein uS10 family. Part of the mitochondrial small ribosomal subunit.

The protein localises to the mitochondrion. Involved in mitochondrial genome encoded proteins translation. Involved in the binding of tRNA to the ribosomes. The chain is Small ribosomal subunit protein uS10m (RSM10) from Candida glabrata (strain ATCC 2001 / BCRC 20586 / JCM 3761 / NBRC 0622 / NRRL Y-65 / CBS 138) (Yeast).